Here is a 449-residue protein sequence, read N- to C-terminus: Glucose-6-phosphate isomerase (449 aa).

Residue Glu291 is the Proton donor of the active site. Active-site residues include His312 and Lys426.

This sequence belongs to the GPI family.

The protein localises to the cytoplasm. The catalysed reaction is alpha-D-glucose 6-phosphate = beta-D-fructose 6-phosphate. Its pathway is carbohydrate biosynthesis; gluconeogenesis. The protein operates within carbohydrate degradation; glycolysis; D-glyceraldehyde 3-phosphate and glycerone phosphate from D-glucose: step 2/4. Its function is as follows. Catalyzes the reversible isomerization of glucose-6-phosphate to fructose-6-phosphate. The polypeptide is Glucose-6-phosphate isomerase (Streptococcus gordonii (strain Challis / ATCC 35105 / BCRC 15272 / CH1 / DL1 / V288)).